The chain runs to 86 residues: MYCIELTIKLSPMPLVVQRKEHGEAKRLYSDVVESIKNGNPRLLELTCEKVEDKRITVLVSEITAVQIYEKTSSSTSKRPGFSLQN.

The protein belongs to the UPF0367 family.

The sequence is that of UPF0367 protein NATL1_01981 from Prochlorococcus marinus (strain NATL1A).